A 361-amino-acid chain; its full sequence is MTPIPSDRLDAILARHEFVTAQLADGSADAESIVQLSRELSELDGVVAAIRHYRAAEANLAGIRALIDEPGGDPEMRALAAEEKPEAEEALEQAHRALQLMLLPKDAADEKSAILEIRAGTGGDEAALFAGDLFRMYAKYAESKGWRVEVISESEGTVGGYREVVAEVKGRSVFSRLKFESGAHRVQRVPDTETQGRIHTSAATVAVLPEAEEVDIAINEADLKIDTMRAQGAGGQHVNKTESAIRITHMPTGVVVFVQEERSQHKNRARAMALLRSKLFDAERTAKDSARAADRKAQVGSGDRSERIRTYNFPQGRVTDHRINLTLYKLEEVMAGPALDEVIDALVTEHQAELLAAEGMA.

The residue at position 236 (Q236) is an N5-methylglutamine. Residues 285–309 show a composition bias toward basic and acidic residues; the sequence is TAKDSARAADRKAQVGSGDRSERIR. The disordered stretch occupies residues 285–313; the sequence is TAKDSARAADRKAQVGSGDRSERIRTYNF.

This sequence belongs to the prokaryotic/mitochondrial release factor family. Post-translationally, methylated by PrmC. Methylation increases the termination efficiency of RF1.

Its subcellular location is the cytoplasm. Its function is as follows. Peptide chain release factor 1 directs the termination of translation in response to the peptide chain termination codons UAG and UAA. This is Peptide chain release factor 1 from Methylorubrum populi (strain ATCC BAA-705 / NCIMB 13946 / BJ001) (Methylobacterium populi).